Consider the following 251-residue polypeptide: Uridylate kinase (251 aa).

19-22 lines the ATP pocket; that stretch reads KLSG. Glycine 61 lines the UMP pocket. Residues glycine 62 and arginine 66 each contribute to the ATP site. UMP contacts are provided by residues aspartate 81 and 142–149; that span reads IGNPFFTT. Residues threonine 169, glutamine 170, tyrosine 175, and aspartate 178 each coordinate ATP.

This sequence belongs to the UMP kinase family. As to quaternary structure, homohexamer.

It is found in the cytoplasm. It carries out the reaction UMP + ATP = UDP + ADP. The protein operates within pyrimidine metabolism; CTP biosynthesis via de novo pathway; UDP from UMP (UMPK route): step 1/1. Inhibited by UTP. In terms of biological role, catalyzes the reversible phosphorylation of UMP to UDP. The chain is Uridylate kinase from Hyphomonas neptunium (strain ATCC 15444).